We begin with the raw amino-acid sequence, 264 residues long: H-2 class II histocompatibility antigen, E-D beta chain (264 aa).

The N-terminal stretch at 1 to 31 (MVWLPRVPCVAAVILLLTVLSPPVALVRDTR) is a signal peptide. The beta-1 stretch occupies residues 32 to 121 (PRFLEYVTSE…ISDKFLVRRR (90 aa)). The Extracellular segment spans residues 32 to 225 (PRFLEYVTSE…KAQSTSAQNK (194 aa)). 2 cysteine pairs are disulfide-bonded: C42–C106 and C144–C200. An N-linked (GlcNAc...) asparagine glycan is attached at N46. The interval 122–215 (VEPTVTVYPT…SLTDPVTVEW (94 aa)) is beta-2. An Ig-like C1-type domain is found at 124–214 (PTVTVYPTKT…PSLTDPVTVE (91 aa)). Residues 216–225 (KAQSTSAQNK) form a connecting peptide region. A helical transmembrane segment spans residues 226-248 (MLSGVGGFVLGLLFLGAGLFIYF). Residues 249–264 (RNQKGQSGLQPTGLLS) are Cytoplasmic-facing.

The protein belongs to the MHC class II family.

It is found in the membrane. The sequence is that of H-2 class II histocompatibility antigen, E-D beta chain from Mus musculus (Mouse).